The primary structure comprises 303 residues: Probable serine acetyltransferase 1 (303 aa).

Disordered stretches follow at residues 1–36 (MTAGQPLRDDPQPRRHSPPALHPAVVPAYPPPESDA) and 271–290 (NPARLLGGKKGDDMPGESMD).

It belongs to the transferase hexapeptide repeat family. In terms of assembly, homomultimer.

It carries out the reaction L-serine + acetyl-CoA = O-acetyl-L-serine + CoA. Its pathway is amino-acid biosynthesis; L-cysteine biosynthesis; L-cysteine from L-serine: step 1/2. The chain is Probable serine acetyltransferase 1 (SAT1) from Oryza sativa subsp. japonica (Rice).